Here is a 326-residue protein sequence, read N- to C-terminus: Olfactory receptor 8A1 (326 aa).

Topologically, residues Met1 to Phe45 are extracellular. Asn22 carries an N-linked (GlcNAc...) asparagine glycan. The chain crosses the membrane as a helical span at residues Leu46–Ile66. Residues Cys67 to Tyr77 are Cytoplasmic-facing. A helical transmembrane segment spans residues Tyr78–Val100. At Asn101–Ser116 the chain is on the extracellular side. Residues Cys114 and Cys195 are joined by a disulfide bond. Residues Gln117 to Tyr137 traverse the membrane as a helical segment. Residues Asp138–Asn150 are Cytoplasmic-facing. Residues Ile151 to Ile171 traverse the membrane as a helical segment. Residues Gly172–Asn222 are Extracellular-facing. The chain crosses the membrane as a helical span at residues Ile223–Gly243. Topologically, residues Ile244–His260 are cytoplasmic. The helical transmembrane segment at Leu261–Ile281 threads the bilayer. At Ser282–Glu287 the chain is on the extracellular side. A helical membrane pass occupies residues Asn288–Leu308. Topologically, residues Arg309–Phe326 are cytoplasmic.

It belongs to the G-protein coupled receptor 1 family.

The protein localises to the cell membrane. In terms of biological role, odorant receptor. The polypeptide is Olfactory receptor 8A1 (OR8A1) (Homo sapiens (Human)).